A 191-amino-acid chain; its full sequence is Cell number regulator 1 (191 aa).

Residues 13–44 (FSAGAPPTAPPPPAAYHQQQQQHGANMDTSRP) are disordered. Low complexity predominate over residues 27-37 (AYHQQQQQHGA). The helical transmembrane segment at 91 to 113 (IASGLVYGLICASTGMGCLYSCL) threads the bilayer.

Belongs to the cornifelin family. Expressed in roots, coleoptiles, stalks and silks. Detected in leaves, apical meristems, immature ears and pericarps. Highest expression in coleoptiles and silks.

The protein localises to the membrane. In terms of biological role, acts as a negative regulator of cell number. The chain is Cell number regulator 1 (CNR1) from Zea mays (Maize).